Here is a 508-residue protein sequence, read N- to C-terminus: MGLPWYRVHTVVLNDPGRLLSVHIMHTALVAGWAGSMALYELAVFDPSDPVLDPMWRQGMFVIPFMTRLGITNSWGGWSITGGTITNPGIWSYEGVAGAHIVFSGLCFLAAIWHWVYWDLEIFCDERTGKPSLDLPKIFGIHLFLSGVACFGFGAFHVTGLYGPGIWVSDPYGLTGKVQPVSPAWGAEGFDPFVPGGIASHHIAAGTLGILAGLFHLSVRPPQRLYKGLRMGNIETVLSSSIAAVFFAAFVVAGTMWYGSATTPIELFGPTRYQWDQGYFQQEIYRRISAGLAENLSLSEAWSKIPEKLAFYDYIGNNPAKGGLFRAGSMDNGDGIAIGWLGHPVFRDKEGRELFVRRMPTFFETFPVVLVDGDGIVRADVPFRRAESKYSVEQVGVTVEFYGGELNGVSYSDPATVKKYARRAQLGEIFELDRATLKSDGVFRSSPRGWFTFGHASFALLFFFGHIWHGARTLFRDVFAGIDPDLDAQVEFGAFQKLGDPTTKRQAV.

6 helical membrane-spanning segments follow: residues 21 to 36 (SVHI…WAGS), 101 to 115 (IVFS…IWHW), 140 to 156 (GIHL…FGAF), 203 to 218 (IAAG…FHLS), 237 to 252 (VLSS…AFVV), and 457 to 472 (SFAL…HGAR).

Belongs to the PsbB/PsbC family. PsbB subfamily. PSII is composed of 1 copy each of membrane proteins PsbA, PsbB, PsbC, PsbD, PsbE, PsbF, PsbH, PsbI, PsbJ, PsbK, PsbL, PsbM, PsbT, PsbX, PsbY, PsbZ, Psb30/Ycf12, at least 3 peripheral proteins of the oxygen-evolving complex and a large number of cofactors. It forms dimeric complexes. The cofactor is Binds multiple chlorophylls. PSII binds additional chlorophylls, carotenoids and specific lipids..

It is found in the plastid. The protein resides in the chloroplast thylakoid membrane. Functionally, one of the components of the core complex of photosystem II (PSII). It binds chlorophyll and helps catalyze the primary light-induced photochemical processes of PSII. PSII is a light-driven water:plastoquinone oxidoreductase, using light energy to abstract electrons from H(2)O, generating O(2) and a proton gradient subsequently used for ATP formation. This Lemna minor (Common duckweed) protein is Photosystem II CP47 reaction center protein.